The following is a 150-amino-acid chain: Lymphocyte antigen 6 complex locus protein G5c (150 aa).

Positions 1–41 (MRFMAGPAGSQSLGPLCFHSSPQALYTVLLIVLVMMSLVFG) are cleaved as a signal peptide. Residues 60–150 (LRCYRCLLET…DPQNRGLYTP (91 aa)) enclose the UPAR/Ly6 domain. 4 cysteine pairs are disulfide-bonded: Cys62–Cys89, Cys65–Cys74, Cys81–Cys107, and Cys134–Cys139. Residue Asn96 is glycosylated (N-linked (GlcNAc...) asparagine).

In terms of assembly, forms oligomers. Post-translationally, N-glycosylated. As to expression, detected in T-cell lines and fetal and adult lung.

The protein resides in the secreted. Its function is as follows. May have a role in hematopoietic cell differentiation. This is Lymphocyte antigen 6 complex locus protein G5c (LY6G5C) from Homo sapiens (Human).